Here is a 497-residue protein sequence, read N- to C-terminus: Guanosine-5'-triphosphate,3'-diphosphate pyrophosphatase (497 aa).

Belongs to the GppA/Ppx family. GppA subfamily.

The enzyme catalyses guanosine 3'-diphosphate 5'-triphosphate + H2O = guanosine 3',5'-bis(diphosphate) + phosphate + H(+). The protein operates within purine metabolism; ppGpp biosynthesis; ppGpp from GTP: step 2/2. Functionally, catalyzes the conversion of pppGpp to ppGpp. Guanosine pentaphosphate (pppGpp) is a cytoplasmic signaling molecule which together with ppGpp controls the 'stringent response', an adaptive process that allows bacteria to respond to amino acid starvation, resulting in the coordinated regulation of numerous cellular activities. This chain is Guanosine-5'-triphosphate,3'-diphosphate pyrophosphatase, found in Vibrio cholerae serotype O1 (strain ATCC 39541 / Classical Ogawa 395 / O395).